The primary structure comprises 429 residues: Serine hydroxymethyltransferase (429 aa).

120 to 122 (GHI) is a (6S)-5,6,7,8-tetrahydrofolate binding site. Lysine 226 carries the post-translational modification N6-(pyridoxal phosphate)lysine.

Belongs to the SHMT family. As to quaternary structure, homodimer. The cofactor is pyridoxal 5'-phosphate.

Its subcellular location is the cytoplasm. The enzyme catalyses 5,10-methylenetetrahydromethanopterin + glycine + H2O = 5,6,7,8-tetrahydromethanopterin + L-serine. It carries out the reaction L-allo-threonine = acetaldehyde + glycine. It participates in amino-acid biosynthesis; glycine biosynthesis; glycine from L-serine: step 1/1. Catalyzes the reversible interconversion of serine and glycine with tetrahydromethanopterin (H4MPT) serving as the one-carbon carrier. The use of tetrahydrofolate (THF or H4PteGlu) as the pteridine substrate is 450-fold less efficient than that of H4MPT. Also exhibits a pteridine-independent aldolase activity toward beta-hydroxyamino acids, producing glycine and aldehydes, via a retro-aldol mechanism. Thus, is able to catalyze the cleavage of L-allo-threonine and L-threo-beta-phenylserine. The chain is Serine hydroxymethyltransferase from Methanocaldococcus jannaschii (strain ATCC 43067 / DSM 2661 / JAL-1 / JCM 10045 / NBRC 100440) (Methanococcus jannaschii).